Consider the following 346-residue polypeptide: Olfactory receptor 8G5 (346 aa).

Over methionine 1 to leucine 60 the chain is Extracellular. 2 N-linked (GlcNAc...) asparagine glycosylation sites follow: asparagine 16 and asparagine 40. The chain crosses the membrane as a helical span at residues proline 61–isoleucine 81. Residues threonine 82–histidine 89 are Cytoplasmic-facing. The helical transmembrane segment at leucine 90–threonine 110 threads the bilayer. The Extracellular segment spans residues valine 111 to threonine 134. Cysteine 132 and cysteine 214 are joined by a disulfide. A helical membrane pass occupies residues glutamine 135–tyrosine 155. At aspartate 156–lysine 174 the chain is on the cytoplasmic side. Residues alanine 175–isoleucine 195 traverse the membrane as a helical segment. Over glycine 196–leucine 232 the chain is Extracellular. A helical transmembrane segment spans residues leucine 233–serine 252. At tyrosine 253–alanine 272 the chain is on the cytoplasmic side. The chain crosses the membrane as a helical span at residues phenylalanine 273–methionine 293. The Extracellular portion of the chain corresponds to tyrosine 294–glycine 306. Residues lysine 307 to leucine 327 traverse the membrane as a helical segment. At arginine 328–leucine 346 the chain is on the cytoplasmic side.

The protein belongs to the G-protein coupled receptor 1 family.

Its subcellular location is the cell membrane. In terms of biological role, odorant receptor. This Homo sapiens (Human) protein is Olfactory receptor 8G5 (OR8G5).